The chain runs to 1185 residues: Pyruvate carboxylase (1185 aa).

One can recognise a Biotin carboxylation domain in the interval 32 to 484; that stretch reads KFTKVLVANR…WTTFIDDTPE (453 aa). Positions 150, 234, and 269 each coordinate ATP. An ATP-grasp domain is found at 154–351; it reads RAIAIRCGVP…IVSAQLHVAA (198 aa). R326 is a catalytic residue. Positions 570-838 constitute a Pyruvate carboxyltransferase domain; it reads GLIMDTTWRD…QLEFDNNQLR (269 aa). Substrate-binding positions include 578 to 582 and R651; that span reads RDAHQ. D579 contacts a divalent metal cation. The a divalent metal cation site is built by K747, H777, and H779. K747 is subject to N6-carboxylysine. A substrate-binding site is contributed by T912. The 76-residue stretch at 1108 to 1183 folds into the Biotinyl-binding domain; that stretch reads RADPGNPGHV…NGGDLCAVLE (76 aa). Position 1149 is an N6-biotinyllysine (K1149).

Biotin is required as a cofactor. It depends on Zn(2+) as a cofactor.

The protein localises to the cytoplasm. It carries out the reaction hydrogencarbonate + pyruvate + ATP = oxaloacetate + ADP + phosphate + H(+). It participates in carbohydrate biosynthesis; gluconeogenesis. In terms of biological role, pyruvate carboxylase catalyzes a 2-step reaction, involving the ATP-dependent carboxylation of the covalently attached biotin in the first step and the transfer of the carboxyl group to pyruvate in the second. The protein is Pyruvate carboxylase (pyr1) of Schizosaccharomyces pombe (strain 972 / ATCC 24843) (Fission yeast).